The following is a 546-amino-acid chain: Chaperonin GroEL (546 aa).

Residues 29–32 (TMGP), lysine 50, 86–90 (DGTTT), glycine 414, and aspartate 492 each bind ATP.

It belongs to the chaperonin (HSP60) family. Forms a cylinder of 14 subunits composed of two heptameric rings stacked back-to-back. Interacts with the co-chaperonin GroES.

Its subcellular location is the cytoplasm. It catalyses the reaction ATP + H2O + a folded polypeptide = ADP + phosphate + an unfolded polypeptide.. In terms of biological role, together with its co-chaperonin GroES, plays an essential role in assisting protein folding. The GroEL-GroES system forms a nano-cage that allows encapsulation of the non-native substrate proteins and provides a physical environment optimized to promote and accelerate protein folding. The polypeptide is Chaperonin GroEL (Helicobacter pylori (strain J99 / ATCC 700824) (Campylobacter pylori J99)).